The primary structure comprises 338 residues: Methionine import ATP-binding protein MetN 2 (338 aa).

The ABC transporter domain maps to 2–242 (IEIEKVCVDF…PQHAFTQQLV (241 aa)). 39-46 (GTSGAGKS) is a binding site for ATP.

The protein belongs to the ABC transporter superfamily. Methionine importer (TC 3.A.1.24) family. As to quaternary structure, the complex is composed of two ATP-binding proteins (MetN), two transmembrane proteins (MetI) and a solute-binding protein (MetQ).

Its subcellular location is the cell inner membrane. The enzyme catalyses L-methionine(out) + ATP + H2O = L-methionine(in) + ADP + phosphate + H(+). It catalyses the reaction D-methionine(out) + ATP + H2O = D-methionine(in) + ADP + phosphate + H(+). Part of the ABC transporter complex MetNIQ involved in methionine import. Responsible for energy coupling to the transport system. The sequence is that of Methionine import ATP-binding protein MetN 2 from Salmonella typhi.